Reading from the N-terminus, the 513-residue chain is Interferon alpha/beta receptor 2 (513 aa).

The signal sequence occupies residues 1 to 21 (MRSRCTVSAVGLLSLCLVVSA). Residues 22 to 242 (SLETITPSAF…GQESGLSESA (221 aa)) are Extracellular-facing. 2 disulfide bridges follow: cysteine 39-cysteine 123 and cysteine 85-cysteine 93. 5 N-linked (GlcNAc...) asparagine glycosylation sites follow: asparagine 42, asparagine 58, asparagine 65, asparagine 78, and asparagine 84. Residues asparagine 149, asparagine 191, and asparagine 195 are each glycosylated (N-linked (GlcNAc...) asparagine). A disulfide bond links cysteine 210 and cysteine 227. A helical membrane pass occupies residues 243–263 (IVGITTSCLVVMVFVSTIVML). At 264-513 (KRIGYICLKD…ADVGDGYIMR (250 aa)) the chain is on the cytoplasmic side. A disordered region spans residues 334 to 402 (GYTMHGLTGK…DPTGPYERRK (69 aa)). A Phosphotyrosine modification is found at tyrosine 335. The span at 344–354 (PLQQTSDTSAS) shows a compositional bias: polar residues. Over residues 377 to 389 (GAEPELPTEAGAG) the composition is skewed to low complexity. Serine 403 bears the Phosphoserine mark. The segment at 421–444 (GDNIIFNVNLNSVFLRVLHDEDAS) is mediates interaction with STAT2 (and required for the recruitment of USP18). Phosphoserine occurs at positions 448 and 465. The disordered stretch occupies residues 458 to 513 (EGPQRTESDLRIAGGDRTQPPLPSLPSQDLWTEDGSSEKSDTSDSDADVGDGYIMR). The residue at position 510 (tyrosine 510) is a Phosphotyrosine.

This sequence belongs to the type II cytokine receptor family. Heterodimer with IFNAR1; forming the receptor for type I interferon. Interacts with the transcriptional factors STAT1 and STAT2. Interacts with JAK1. Interacts with USP18; indirectly via STAT2, it negatively regulates the assembly of the ternary interferon-IFNAR1-IFNAR2 complex and therefore type I interferon signaling. Post-translationally, phosphorylated on tyrosine residues upon interferon binding. Phosphorylation at Tyr-335 or Tyr-510 are sufficient to mediate interferon dependent activation of STAT1, STAT2 and STAT3 leading to antiproliferative effects on many different cell types. Widely expressed. Detected in liver, testis, kidney, salivary gland, thymus, brain, lung and placenta. Isoform 1, isoform 2 and isoform 3 are expressed in brain.

The protein resides in the cell membrane. It localises to the secreted. Together with IFNAR1, forms the heterodimeric receptor for type I interferons (including interferons alpha, beta, epsilon, omega and kappa). Type I interferon binding activates the JAK-STAT signaling cascade, resulting in transcriptional activation or repression of interferon-regulated genes that encode the effectors of the interferon response. Mechanistically, type I interferon-binding brings the IFNAR1 and IFNAR2 subunits into close proximity with one another, driving their associated Janus kinases (JAKs) (TYK2 bound to IFNAR1 and JAK1 bound to IFNAR2) to cross-phosphorylate one another. The activated kinases phosphorylate specific tyrosine residues on the intracellular domains of IFNAR1 and IFNAR2, forming docking sites for the STAT transcription factors (STAT1, STAT2 and STAT). STAT proteins are then phosphorylated by the JAKs, promoting their translocation into the nucleus to regulate expression of interferon-regulated genes. Functionally, may be potent inhibitors of type I IFN receptor activity. The chain is Interferon alpha/beta receptor 2 (Ifnar2) from Mus musculus (Mouse).